We begin with the raw amino-acid sequence, 415 residues long: Phosphoglycerate kinase (415 aa).

(2R)-3-phosphoglycerate is bound by residues valine 22, aspartate 23, phenylalanine 24, asparagine 25, glutamine 37, arginine 38, serine 61, histidine 62, glycine 64, leucine 120, arginine 121, histidine 168, and arginine 169. Glycine 212 is an ADP binding site. Glycine 212 contacts CDP. AMP is bound by residues alanine 213 and lysine 214. Alanine 213 provides a ligand contact to ATP. Residue alanine 213 coordinates Mg(2+). Aspartate 217 contributes to the CDP binding site. Aspartate 217 is a Mg(2+) binding site. Residue lysine 218 coordinates AMP. An ATP-binding site is contributed by lysine 218. Glycine 236 provides a ligand contact to ADP. Glycine 236 is a CDP binding site. Residues glycine 237 and glycine 311 each coordinate AMP. ATP-binding residues include glycine 237 and glycine 311. Glycine 336 and phenylalanine 341 together coordinate CDP. Phenylalanine 341 is a binding site for ADP. Residue glutamate 342 participates in AMP binding. Residues glutamate 342, aspartate 373, and threonine 374 each coordinate ATP. Aspartate 373 serves as a coordination point for Mg(2+).

The protein belongs to the phosphoglycerate kinase family. In terms of assembly, monomer. The cofactor is Mg(2+).

Its subcellular location is the cytoplasm. The catalysed reaction is (2R)-3-phosphoglycerate + ATP = (2R)-3-phospho-glyceroyl phosphate + ADP. It functions in the pathway carbohydrate degradation; glycolysis; pyruvate from D-glyceraldehyde 3-phosphate: step 2/5. The polypeptide is Phosphoglycerate kinase (PGK) (Opisthorchis sinensis (Clonorchis sinensis)).